Here is a 487-residue protein sequence, read N- to C-terminus: uncharacterized protein (487 aa).

The protein belongs to the UbiD family.

This is an uncharacterized protein from Aeropyrum pernix (strain ATCC 700893 / DSM 11879 / JCM 9820 / NBRC 100138 / K1).